Here is a 710-residue protein sequence, read N- to C-terminus: Polyribonucleotide nucleotidyltransferase (710 aa).

The Mg(2+) site is built by D489 and D495. The region spanning 556-615 (PKIDTIKIDVDKIKVVIGKGGETIDKIIAETGVKIDIDDEGNVSIYSSDQAAIDRTKEII) is the KH domain. An S1 motif domain is found at 625 to 693 (GEVYHAKVVR…EKGRVDASMK (69 aa)). The disordered stretch occupies residues 691–710 (SMKALIPRPPKPEKKEEKHD). Over residues 700–710 (PKPEKKEEKHD) the composition is skewed to basic and acidic residues.

This sequence belongs to the polyribonucleotide nucleotidyltransferase family. Mg(2+) is required as a cofactor.

The protein resides in the cytoplasm. It catalyses the reaction RNA(n+1) + phosphate = RNA(n) + a ribonucleoside 5'-diphosphate. Functionally, involved in mRNA degradation. Catalyzes the phosphorolysis of single-stranded polyribonucleotides processively in the 3'- to 5'-direction. The sequence is that of Polyribonucleotide nucleotidyltransferase from Streptococcus pyogenes serotype M1.